A 1250-amino-acid polypeptide reads, in one-letter code: DNA-directed RNA polymerase subunit beta (1250 aa).

The disordered stretch occupies residues 1139-1226 (GGAELAKPAP…DLFDEGDEDL (88 aa)). Acidic residues-rich tracts occupy residues 1155-1183 (ESGE…DPEE) and 1207-1226 (ADDD…DEDL).

It belongs to the RNA polymerase beta chain family. In terms of assembly, the RNAP catalytic core consists of 2 alpha, 1 beta, 1 beta' and 1 omega subunit. When a sigma factor is associated with the core the holoenzyme is formed, which can initiate transcription.

The enzyme catalyses RNA(n) + a ribonucleoside 5'-triphosphate = RNA(n+1) + diphosphate. DNA-dependent RNA polymerase catalyzes the transcription of DNA into RNA using the four ribonucleoside triphosphates as substrates. This is DNA-directed RNA polymerase subunit beta from Symbiobacterium thermophilum (strain DSM 24528 / JCM 14929 / IAM 14863 / T).